The sequence spans 449 residues: Tol-Pal system protein TolB (449 aa).

Positions 1-36 are cleaved as a signal peptide; that stretch reads MDCPNMPLHINRRQMLLSAATAAGALALGPARDAFG.

The protein belongs to the TolB family. The Tol-Pal system is composed of five core proteins: the inner membrane proteins TolA, TolQ and TolR, the periplasmic protein TolB and the outer membrane protein Pal. They form a network linking the inner and outer membranes and the peptidoglycan layer.

Its subcellular location is the periplasm. Functionally, part of the Tol-Pal system, which plays a role in outer membrane invagination during cell division and is important for maintaining outer membrane integrity. This chain is Tol-Pal system protein TolB, found in Rhodopseudomonas palustris (strain HaA2).